The chain runs to 906 residues: Kinesin-like protein KIN-7G (906 aa).

Positions 26–344 (SVAVAVRFRP…LKFAHRAKHI (319 aa)) constitute a Kinesin motor domain. 105–112 (GVTSSGKT) is an ATP binding site. Coiled coils occupy residues 346–385 (IQAT…RTGT), 733–814 (SDEF…GRNQ), and 839–875 (GDMN…LEKE). Residues 803–840 (RLSSELASGRNQRRGSHGPRGARRESHTKRYEPARRGD) are disordered. The segment covering 813–823 (NQRRGSHGPRG) has biased composition (basic residues). The span at 824-840 (ARRESHTKRYEPARRGD) shows a compositional bias: basic and acidic residues.

Belongs to the TRAFAC class myosin-kinesin ATPase superfamily. Kinesin family. KIN-7 subfamily.

The chain is Kinesin-like protein KIN-7G from Oryza sativa subsp. japonica (Rice).